The chain runs to 222 residues: Large ribosomal subunit protein uL1 (222 aa).

This sequence belongs to the universal ribosomal protein uL1 family. As to quaternary structure, part of the 50S ribosomal subunit.

Its function is as follows. Binds directly to 23S rRNA. Probably involved in E site tRNA release. Functionally, protein L1 is also a translational repressor protein, it controls the translation of its operon by binding to its mRNA. The chain is Large ribosomal subunit protein uL1 from Pyrobaculum calidifontis (strain DSM 21063 / JCM 11548 / VA1).